Consider the following 451-residue polypeptide: Tubulin beta chain (451 aa).

8 residues coordinate GTP: Q11, E69, S138, G142, T143, G144, N204, and N226. A Mg(2+)-binding site is contributed by E69. Residues Q426–Y451 are disordered. Over residues T429–Y451 the composition is skewed to acidic residues.

This sequence belongs to the tubulin family. In terms of assembly, dimer of alpha and beta chains. A typical microtubule is a hollow water-filled tube with an outer diameter of 25 nm and an inner diameter of 15 nM. Alpha-beta heterodimers associate head-to-tail to form protofilaments running lengthwise along the microtubule wall with the beta-tubulin subunit facing the microtubule plus end conferring a structural polarity. Microtubules usually have 13 protofilaments but different protofilament numbers can be found in some organisms and specialized cells. It depends on Mg(2+) as a cofactor.

Its subcellular location is the cytoplasm. The protein localises to the cytoskeleton. Its function is as follows. Tubulin is the major constituent of microtubules, a cylinder consisting of laterally associated linear protofilaments composed of alpha- and beta-tubulin heterodimers. Microtubules grow by the addition of GTP-tubulin dimers to the microtubule end, where a stabilizing cap forms. Below the cap, tubulin dimers are in GDP-bound state, owing to GTPase activity of alpha-tubulin. This chain is Tubulin beta chain, found in Naegleria pringsheimi (Amoeba).